Here is a 20-residue protein sequence, read N- to C-terminus: Putative 18 kDa spermidine-binding protein (20 aa).

As to quaternary structure, dimer of 18 kDa and 60 kDa subunit.

It is found in the microsome membrane. The protein resides in the endoplasmic reticulum membrane. Functionally, may have spermidine-binding activity. This chain is Putative 18 kDa spermidine-binding protein, found in Zea mays (Maize).